Consider the following 687-residue polypeptide: DNA-directed RNA polymerase subunit beta' (687 aa).

Positions 69, 71, 87, and 90 each coordinate Zn(2+). Residues Asp495, Asp497, and Asp499 each contribute to the Mg(2+) site.

Belongs to the RNA polymerase beta' chain family. RpoC1 subfamily. As to quaternary structure, in plastids the minimal PEP RNA polymerase catalytic core is composed of four subunits: alpha, beta, beta', and beta''. When a (nuclear-encoded) sigma factor is associated with the core the holoenzyme is formed, which can initiate transcription. It depends on Mg(2+) as a cofactor. Zn(2+) serves as cofactor.

The protein localises to the plastid. Its subcellular location is the chloroplast. It catalyses the reaction RNA(n) + a ribonucleoside 5'-triphosphate = RNA(n+1) + diphosphate. In terms of biological role, DNA-dependent RNA polymerase catalyzes the transcription of DNA into RNA using the four ribonucleoside triphosphates as substrates. The protein is DNA-directed RNA polymerase subunit beta' of Solanum tuberosum (Potato).